The sequence spans 187 residues: Elongation factor P (187 aa).

This sequence belongs to the elongation factor P family.

The protein localises to the cytoplasm. The protein operates within protein biosynthesis; polypeptide chain elongation. Its function is as follows. Involved in peptide bond synthesis. Stimulates efficient translation and peptide-bond synthesis on native or reconstituted 70S ribosomes in vitro. Probably functions indirectly by altering the affinity of the ribosome for aminoacyl-tRNA, thus increasing their reactivity as acceptors for peptidyl transferase. The chain is Elongation factor P from Rhodococcus jostii (strain RHA1).